Consider the following 912-residue polypeptide: Bifunctional uridylyltransferase/uridylyl-removing enzyme (912 aa).

The segment at 1–369 (MLPRIANQRA…FFASLRSRRK (369 aa)) is uridylyltransferase. The uridylyl-removing stretch occupies residues 370 to 722 (KVGPFFIEGG…AHWYPARGAT (353 aa)). The 123-residue stretch at 486–608 (VDEHTIRAIG…VQSQERLRLL (123 aa)) folds into the HD domain. 2 consecutive ACT domains span residues 723–802 (LVTV…LVPQ) and 834–912 (VIEV…KDAA).

It belongs to the GlnD family. It depends on Mg(2+) as a cofactor.

The enzyme catalyses [protein-PII]-L-tyrosine + UTP = [protein-PII]-uridylyl-L-tyrosine + diphosphate. The catalysed reaction is [protein-PII]-uridylyl-L-tyrosine + H2O = [protein-PII]-L-tyrosine + UMP + H(+). Uridylyltransferase (UTase) activity is inhibited by glutamine, while glutamine activates uridylyl-removing (UR) activity. In terms of biological role, modifies, by uridylylation and deuridylylation, the PII regulatory proteins (GlnB and homologs), in response to the nitrogen status of the cell that GlnD senses through the glutamine level. Under low glutamine levels, catalyzes the conversion of the PII proteins and UTP to PII-UMP and PPi, while under higher glutamine levels, GlnD hydrolyzes PII-UMP to PII and UMP (deuridylylation). Thus, controls uridylylation state and activity of the PII proteins, and plays an important role in the regulation of nitrogen assimilation and metabolism. This chain is Bifunctional uridylyltransferase/uridylyl-removing enzyme, found in Novosphingobium aromaticivorans (strain ATCC 700278 / DSM 12444 / CCUG 56034 / CIP 105152 / NBRC 16084 / F199).